A 311-amino-acid polypeptide reads, in one-letter code: MSQNQEFSKKEIYNLNKLQKRLRRNVGEAIADFNMIEDGDRIMVCLSGGKDSYTMLEILRNLQQSAPISFSLVAVNLDQKQPGFPEHILPEYLEKLGVEYKIVEENTYGIVKEKIPEGKTTCSLCSRLRRGILYRTATELGATKIALGHHRDDILQTLFLNMFYGGKMKGMPPKLMSDDGKHIVIRPLAYCREKDIQRFADAKAFPIIPCNLCGSQPNLQRQVIADMLRDWDKRYPGRIETMFSAMQNVVPSHLCDTNLFDFKGIKHGFEVINGGDLAFDREELPLQPAGWQPEDDENQLDELRLNVVEVK.

The PP-loop motif signature appears at 47–52; the sequence is SGGKDS. Residues C122, C125, and C213 each coordinate [4Fe-4S] cluster.

The protein belongs to the TtcA family. As to quaternary structure, homodimer. The cofactor is Mg(2+). Requires [4Fe-4S] cluster as cofactor.

It is found in the cytoplasm. The catalysed reaction is cytidine(32) in tRNA + S-sulfanyl-L-cysteinyl-[cysteine desulfurase] + AH2 + ATP = 2-thiocytidine(32) in tRNA + L-cysteinyl-[cysteine desulfurase] + A + AMP + diphosphate + H(+). It participates in tRNA modification. Catalyzes the ATP-dependent 2-thiolation of cytidine in position 32 of tRNA, to form 2-thiocytidine (s(2)C32). The sulfur atoms are provided by the cysteine/cysteine desulfurase (IscS) system. This is tRNA-cytidine(32) 2-sulfurtransferase from Escherichia fergusonii (strain ATCC 35469 / DSM 13698 / CCUG 18766 / IAM 14443 / JCM 21226 / LMG 7866 / NBRC 102419 / NCTC 12128 / CDC 0568-73).